The sequence spans 1026 residues: MRFFALFIYRPVATILIAAAITLCGILGFRLLPVAPLPQVDFPVIMVSASLPGASPETMASSVATPLERSLGRIAGVNEMTSSSSLGSTRIILEFNFDRDINGAARDVQAAINAAQSLLPGGMPSRPTYRKANPSDAPIMILTLTSESWSQGKLYDFASTQLAQTIAQIDGVGDVDVGGSSLPAVRVGLNPQALFNQGVSLDEVREAIDSANVRRPQGAIEDSVHRWQIQTNDELKTAAEYQPLIIHYNNGAAVRLGDVASVTDSVQDVRNAGMTNAKPAILLMIRKLPEANIIQTVDGIRAKLPELRAMIPAAIDLQIAQDRSPTIRASLQEVEETLAISVALVILVVFLFLRSGRATLIPAVAVPVSLIGTFAAMYLCGFSLNNLSLMALTIATGFVVDDAIVVLENIARHLEAGMKPLQAALQGTREVGFTVISMSLSLVAVFLPLLLMGGLPGRLLREFAVTLSVAIGISLVVSLTLTPMMCGWMLKSSKPRTQPRKRGVGRLLVALQQGYGTSLKWVLNHTRLVGVVFLGTVALNIWLYIAIPKTFFPEQDTGVLMGGIQADQSISFQAMRGKLQDFMKIIRDDPAVNNVTGFTGGSRVNSGMMFITLKPRGERKETAQQVIDRLRVKLAKEPGARLFLMAVQDIRVGGRQANASYQYTLLSDSLAALREWEPKIRKALSALPQLADVNSDQQDNGAEMNLIYDRDTMSRLGIDVQAANSLLNNAFGQRQISTIYQPMNQYKVVMEVDPRYSQDISALEKMFVINSDGKAIPLSYFAQWRPANAPLSVNHQGLSAASTIAFNLPTGTSLSQATEAINRTMTQLGVPPTVRGSFSGTAQVFQQTMNSQLILIVAAIATVYIVLGILYESYVHPLTILSTLPSAGVGALLALELFNAPFSLIALIGIMLLIGIVKKNAIMMVDFALEAQRSGGLTPEQAIFQACLLRFRPIMMTTLAALFGALPLVLSGGDGSELRQPLGITIVGGLVMSQLLTLYTTPVVYLFFDRLRLRFSRKNSKPIVEI.

Helical transmembrane passes span 15-35, 333-353, 360-380, 387-407, 431-451, 463-483, 528-548, 853-873, 897-917, 953-973, and 984-1004; these read ILIA…LPVA, EVEE…FLFL, LIPA…MYLC, LSLM…IVVL, VGFT…PLLL, FAVT…TLTP, LVGV…IAIP, LILI…LYES, LFNA…IGIV, PIMM…LSGG, and ITIV…TPVV.

It belongs to the resistance-nodulation-cell division (RND) (TC 2.A.6) family. MdtC subfamily. Part of a tripartite efflux system composed of MdtA, MdtB and MdtC. MdtC forms a heteromultimer with MdtB.

Its subcellular location is the cell inner membrane. The polypeptide is Multidrug resistance protein MdtC (Salmonella agona (strain SL483)).